The following is a 338-amino-acid chain: MRFTTIFWISLTVLATVRAEDGSHAQNEVQAGDGSHVQNEVQVGSEPQTQDSIETPKPTIKYIDFGDLTLSPSASSPAKRNVTLPPDTTMRPDPRQTEPPTEAPTPASTPAPTPDPGPWVDKWIGHDQVKPFPQPEPVTISEKAGVKFKPQIQIRTGCEPYPAVNEYGETGGGLKTTGKSRGNCGGSGYGSQVYGRSTWIRGVWAIMYSWYFPKDSPSPKMGHRHDWEHAIVFIDNPEVSEPKILACSVSSHDGYKKYNPCPSWVIDGTSLKVRYKHAWPLNHDLDATGDGGKFQDSIMWNQLTEDARRALNSVSFGKANTPFNDGKFMPKIENAWPF.

Residues 1–19 (MRFTTIFWISLTVLATVRA) form the signal peptide. Residues 68–119 (LTLSPSASSPAKRNVTLPPDTTMRPDPRQTEPPTEAPTPASTPAPTPDPGPW) form a disordered region. An N-linked (GlcNAc...) asparagine glycan is attached at Asn-81. The span at 101-117 (TEAPTPASTPAPTPDPG) shows a compositional bias: pro residues. The Conserved undecapeptide motif I signature appears at 205–215 (AIMYSWYFPKD). The short motif at 222-227 (GHRHDW) is the Hepta-peptide GHRHDWE motif II element.

This sequence belongs to the Necrosis inducing protein (NPP1) family.

The protein localises to the secreted. Its function is as follows. Secreted effector that contributes strongly to virulence during infection by P.capsici. Causes large necrotic areas in both host C.annuum and non-host N.benthamiana. In Phytophthora capsici, this protein is NLP effector protein 6.